A 254-amino-acid chain; its full sequence is Insulin-like growth factor-binding protein 4 (254 aa).

A signal peptide spans 1–21 (MLPFGLVAALLLAAGPRPSLG). The 81-residue stretch at 23–103 (EAIHCPPCSE…MHGQGVCTEL (81 aa)) folds into the IGFBP N-terminal domain. Cystine bridges form between C27–C53, C30–C55, C38–C56, C44–C59, C67–C80, and C74–C100. The N-linked (GlcNAc...) asparagine glycan is linked to N125. Cystine bridges form between C131-C138, C170-C200, C211-C222, and C224-C245. The region spanning 167 to 245 (QGSCQSELHR…GLEPKGELDC (79 aa)) is the Thyroglobulin type-1 domain. Position 251 is a phosphoserine (S251).

In terms of assembly, binds IGF2 more than IGF1.

The protein localises to the secreted. Its function is as follows. IGF-binding proteins prolong the half-life of the IGFs and have been shown to either inhibit or stimulate the growth promoting effects of the IGFs on cell culture. They alter the interaction of IGFs with their cell surface receptors. The polypeptide is Insulin-like growth factor-binding protein 4 (Igfbp4) (Mus musculus (Mouse)).